Consider the following 108-residue polypeptide: Inner membrane protein H108R (108 aa).

The chain crosses the membrane as a helical span at residues 10–32 (LIVIITILITTRELSTTMLIVSL). The segment covering 49-64 (ENNTFSMPQKNSFNES) has biased composition (polar residues). The tract at residues 49 to 69 (ENNTFSMPQKNSFNESYNKDK) is disordered. N-linked (GlcNAc...) asparagine; by host glycans are attached at residues Asn50 and Asn62.

The protein belongs to the asfivirus H108R family.

The protein resides in the virion membrane. The chain is Inner membrane protein H108R from African swine fever virus (strain Badajoz 1971 Vero-adapted) (Ba71V).